We begin with the raw amino-acid sequence, 225 residues long: UPF0758 protein Sez_1052 (225 aa).

Positions 102–224 constitute an MPN domain; it reads PVLSSAQVAE…YYSFREKSDL (123 aa). The Zn(2+) site is built by His173, His175, and Asp186. Residues 173-186 carry the JAMM motif motif; that stretch reads HNHPSGLTKPSAND.

Belongs to the UPF0758 family.

The chain is UPF0758 protein Sez_1052 from Streptococcus equi subsp. zooepidemicus (strain MGCS10565).